Consider the following 304-residue polypeptide: Coenzyme PQQ synthesis protein B (304 aa).

It belongs to the PqqB family.

The protein operates within cofactor biosynthesis; pyrroloquinoline quinone biosynthesis. May be involved in the transport of PQQ or its precursor to the periplasm. The sequence is that of Coenzyme PQQ synthesis protein B from Stutzerimonas stutzeri (Pseudomonas stutzeri).